The sequence spans 132 residues: MAKDPLAEAGLHFDELNKLRVLEPDVSQKTTELKEECEEFVDKIGQFQKIVGGLIELVDELAKEAETEKMKAIGARNLLKSVEKQREAQHQQLQALIAEKKMQLERYRIEYEALQKVEAEQSEFIDQFILQK.

The stretch at 74–123 (GARNLLKSVEKQREAQHQQLQALIAEKKMQLERYRIEYEALQKVEAEQSE) forms a coiled coil.

Its subcellular location is the golgi apparatus. It localises to the cis-Golgi network. The protein resides in the cytoplasm. The protein localises to the cytoskeleton. It is found in the microtubule organizing center. Its subcellular location is the centrosome. It localises to the centriole. The protein resides in the cell projection. The protein localises to the cilium. It is found in the cytoplasmic vesicle. Its subcellular location is the secretory vesicle. It localises to the acrosome. In terms of biological role, involved in ciliary process assembly. May play a role in the trafficking of ciliary membrane proteins from the Golgi complex to the cilium. Regulates the platelet-derived growth factor receptor-alpha (PDGFRA) signaling pathway. Plays an important role in spermatogenesis, particularly spermiogenesis, when germ cells form flagella. The protein is Intraflagellar transport protein 20 homolog (ift20) of Danio rerio (Zebrafish).